The primary structure comprises 403 residues: L-cysteine:1D-myo-inositol 2-amino-2-deoxy-alpha-D-glucopyranoside ligase (403 aa).

Cys43 provides a ligand contact to Zn(2+). Residues 43 to 46, Thr58, 81 to 83, and Trp223 contribute to the L-cysteinyl-5'-AMP site; these read CGIT and NVT. The 'HIGH' region motif lies at 45–55; it reads ITPYDATHLGH. Residue Cys227 participates in Zn(2+) binding. 245-247 is a binding site for L-cysteinyl-5'-AMP; sequence GAD. His252 is a binding site for Zn(2+). Val278 is an L-cysteinyl-5'-AMP binding site. The 'KMSKS' region motif lies at 284–288; that stretch reads KMSKS.

This sequence belongs to the class-I aminoacyl-tRNA synthetase family. MshC subfamily. In terms of assembly, monomer. Zn(2+) serves as cofactor.

The enzyme catalyses 1D-myo-inositol 2-amino-2-deoxy-alpha-D-glucopyranoside + L-cysteine + ATP = 1D-myo-inositol 2-(L-cysteinylamino)-2-deoxy-alpha-D-glucopyranoside + AMP + diphosphate + H(+). Functionally, catalyzes the ATP-dependent condensation of GlcN-Ins and L-cysteine to form L-Cys-GlcN-Ins. This Acidothermus cellulolyticus (strain ATCC 43068 / DSM 8971 / 11B) protein is L-cysteine:1D-myo-inositol 2-amino-2-deoxy-alpha-D-glucopyranoside ligase.